Reading from the N-terminus, the 323-residue chain is Sphingolipid delta(4)-desaturase DES1 (323 aa).

The N-myristoyl glycine moiety is linked to residue Gly2. The next 2 helical transmembrane spans lie at 41–61 (PNLI…FYIV) and 68–88 (WVIF…TLAI). Residues 89 to 93 (HEIAH) carry the Histidine box-1 motif. A helical transmembrane segment spans residues 102 to 122 (AMWNRWFGMFANLPIGIPYSI). A Histidine box-2 motif is present at residues 128–132 (HMDHH). 3 helical membrane passes run 152–172 (FFCT…FYAF), 184–204 (YLEV…YYFL), and 209–229 (LVYM…SGHF). Positions 259 to 263 (HNEHH) match the Histidine box-3 motif. Ser307 carries the phosphoserine modification.

The protein belongs to the fatty acid desaturase type 1 family. DEGS subfamily. Interacts with RLBP1; the interaction increases synthesis of chromophore-precursors by DEGS1. Post-translationally, myristoylation can target the enzyme to the mitochondria leading to an increase in ceramide levels. In terms of tissue distribution, ubiquitous.

The protein localises to the mitochondrion membrane. It localises to the endoplasmic reticulum membrane. It catalyses the reaction an N-acylsphinganine + 2 Fe(II)-[cytochrome b5] + O2 + 2 H(+) = an N-acylsphing-4-enine + 2 Fe(III)-[cytochrome b5] + 2 H2O. It carries out the reaction all-trans-retinol = 11-cis-retinol. The enzyme catalyses all-trans-retinol = 9-cis-retinol. The catalysed reaction is all-trans-retinol = 13-cis-retinol. It catalyses the reaction 11-cis-retinol = 13-cis-retinol. It carries out the reaction 11-cis-retinol = 9-cis-retinol. Functionally, has sphingolipid-delta-4-desaturase activity. Converts D-erythro-sphinganine to D-erythro-sphingosine (E-sphing-4-enine). Catalyzes the equilibrium isomerization of retinols. In Homo sapiens (Human), this protein is Sphingolipid delta(4)-desaturase DES1.